The chain runs to 1271 residues: SR-related and CTD-associated factor 8 (1271 aa).

The 139-residue stretch at 1-139 folds into the CID domain; that stretch reads MEAVKTFNSE…PLLDMAAGIP (139 aa). T6 carries the phosphothreonine modification. Residue K18 forms a Glycyl lysine isopeptide (Lys-Gly) (interchain with G-Cter in SUMO1) linkage. The span at 270–283 shows a compositional bias: basic and acidic residues; it reads GEDSEHSEEPKKEI. Disordered stretches follow at residues 270–289, 322–354, and 384–468; these read GEDS…SQLS, QQQP…SQQH, and EEVF…PPIR. Position 273 is a phosphoserine (S273). Over residues 327–354 the composition is skewed to polar residues; the sequence is KATPQDSQEGTFGSEHSASPSQGSSQQH. Residues 394 to 443 are compositionally biased toward basic residues; that stretch reads VAVRSRSRTHSRSRSRSPRKRRSRSRSGSRKRKHRKRSRSRSRERKRKSS. Residues 447–461 are compositionally biased toward basic and acidic residues; sequence SSERRAREREKERQK. The region spanning 477–551 is the RRM domain; that stretch reads TTLWVGQVDK…KVIKIAWALN (75 aa). T615 carries the phosphothreonine modification. Phosphoserine occurs at positions 617 and 779. The interval 899–918 is disordered; sequence TQPPAGPQNLPPLSIPNQRM. Pro residues predominate over residues 902 to 912; sequence PAGPQNLPPLS. Residues R917, R927, and R938 each carry the asymmetric dimethylarginine modification. Composition is skewed to pro residues over residues 945-956 and 963-972; these read GIPPQRGIPPPS and HPPPRGPFPP. Residues 945 to 1064 are disordered; it reads GIPPQRGIPP…DGRDHFGRPP (120 aa). Basic and acidic residues-rich tracts occupy residues 1011-1027 and 1034-1064; these read EGDR…RESI and DVRD…GRPP. An Asymmetric dimethylarginine modification is found at R1073. Residues 1198–1271 form a disordered region; that stretch reads YFEGATSQRK…VVESTETEGT (74 aa). Residues 1255–1271 show a composition bias toward acidic residues; sequence ADIESEPVVESTETEGT.

In terms of assembly, interacts with POLR2A; via C-terminal heptapeptide repeat domain (CTD) phosphorylated at 'Ser-2' and 'Ser-5'. Identified in a complex with CDC5L and other spliceosomal proteins.

Its subcellular location is the nucleus. The protein localises to the nucleus matrix. In terms of biological role, anti-terminator protein required to prevent early mRNA termination during transcription. Together with SCAF4, acts by suppressing the use of early, alternative poly(A) sites, thereby preventing the accumulation of non-functional truncated proteins. Mechanistically, associates with the phosphorylated C-terminal heptapeptide repeat domain (CTD) of the largest RNA polymerase II subunit (POLR2A), and subsequently binds nascent RNA upstream of early polyadenylation sites to prevent premature mRNA transcript cleavage and polyadenylation. Independently of SCAF4, also acts as a positive regulator of transcript elongation. The chain is SR-related and CTD-associated factor 8 from Homo sapiens (Human).